The primary structure comprises 219 residues: Large ribosomal subunit protein bL25 (219 aa).

The segment at 193–219 (VSSTELEETPEVPASAVPTTDQGESAE) is disordered. The span at 209–219 (VPTTDQGESAE) shows a compositional bias: polar residues.

Belongs to the bacterial ribosomal protein bL25 family. CTC subfamily. In terms of assembly, part of the 50S ribosomal subunit; part of the 5S rRNA/L5/L18/L25 subcomplex. Contacts the 5S rRNA. Binds to the 5S rRNA independently of L5 and L18.

Its function is as follows. This is one of the proteins that binds to the 5S RNA in the ribosome where it forms part of the central protuberance. This is Large ribosomal subunit protein bL25 from Legionella pneumophila (strain Corby).